A 279-amino-acid polypeptide reads, in one-letter code: MNQISINNVDYIYSDGFEALHDINMSIKKGERVAILGPNGAGKSTLFNMLNGIISPTSGEVKINGLDTKVKKNLNVIRRDVGMVFQDSDDQLFNSSVMQEIAYGLVNMKVSEEELQSRVKWALNVVNMDGFEKKSPHNLSGGQKKRIALASVLAMKPEVLVLDEPTVSLDPRGTIKLVKLLKKINEEMKITIVFSTHDMDIVPLFADKVYVLNEGKLILQGGVKEVFNNKKVLRNINLRLPRVAHLAEILKSDGCIEFDELPLTIGEIRKCIKNLKGGI.

Residues 4–239 enclose the ABC transporter domain; sequence ISINNVDYIY…KKVLRNINLR (236 aa). An ATP-binding site is contributed by 37 to 44; the sequence is GPNGAGKS.

Belongs to the ABC transporter superfamily.

The protein resides in the cell membrane. Its function is as follows. Probably part of an ABC transporter complex. Responsible for energy coupling to the transport system. The protein is Putative ABC transporter ATP-binding protein CA_C1368 of Clostridium acetobutylicum (strain ATCC 824 / DSM 792 / JCM 1419 / IAM 19013 / LMG 5710 / NBRC 13948 / NRRL B-527 / VKM B-1787 / 2291 / W).